Consider the following 73-residue polypeptide: Translation initiation factor IF-1 (73 aa).

In terms of domain architecture, S1-like spans 1-72; it reads MAKEEAIEKD…SKGRIVYRYK (72 aa).

This sequence belongs to the IF-1 family. In terms of assembly, component of the 30S ribosomal translation pre-initiation complex which assembles on the 30S ribosome in the order IF-2 and IF-3, IF-1 and N-formylmethionyl-tRNA(fMet); mRNA recruitment can occur at any time during PIC assembly.

It is found in the cytoplasm. Its function is as follows. One of the essential components for the initiation of protein synthesis. Stabilizes the binding of IF-2 and IF-3 on the 30S subunit to which N-formylmethionyl-tRNA(fMet) subsequently binds. Helps modulate mRNA selection, yielding the 30S pre-initiation complex (PIC). Upon addition of the 50S ribosomal subunit IF-1, IF-2 and IF-3 are released leaving the mature 70S translation initiation complex. The chain is Translation initiation factor IF-1 from Salinibacter ruber (strain DSM 13855 / M31).